The sequence spans 894 residues: Translation factor GUF1 homolog, mitochondrial (894 aa).

The interval 157-189 (EDEGLDGGPPPGMEAKKSSSSSSSNNVHSNCSD) is disordered. A compositionally biased stretch (low complexity) spans 174–188 (SSSSSSSNNVHSNCS). The 178-residue stretch at 199 to 376 (ENIRNFCILA…RIVSEIPSPA (178 aa)) folds into the tr-type G domain. GTP-binding positions include 208–215 (AHIDSGKS), 269–273 (DTPGH), and 323–326 (NKID). The tract at residues 649 to 674 (DHDDCNDNGGSNSDDRSDRSGKNPPD) is disordered.

The protein belongs to the TRAFAC class translation factor GTPase superfamily. Classic translation factor GTPase family. LepA subfamily.

It localises to the mitochondrion inner membrane. The catalysed reaction is GTP + H2O = GDP + phosphate + H(+). Promotes mitochondrial protein synthesis. May act as a fidelity factor of the translation reaction, by catalyzing a one-codon backward translocation of tRNAs on improperly translocated ribosomes. Binds to mitochondrial ribosomes in a GTP-dependent manner. The polypeptide is Translation factor GUF1 homolog, mitochondrial (Plasmodium knowlesi (strain H)).